A 91-amino-acid chain; its full sequence is Small ribosomal subunit protein uS19 (91 aa).

The protein belongs to the universal ribosomal protein uS19 family.

Functionally, protein S19 forms a complex with S13 that binds strongly to the 16S ribosomal RNA. This is Small ribosomal subunit protein uS19 from Synechococcus sp. (strain CC9605).